Consider the following 338-residue polypeptide: Heat-inducible transcription repressor HrcA (338 aa).

It belongs to the HrcA family.

In terms of biological role, negative regulator of class I heat shock genes (grpE-dnaK-dnaJ and groELS operons). Prevents heat-shock induction of these operons. The chain is Heat-inducible transcription repressor HrcA from Thermotoga petrophila (strain ATCC BAA-488 / DSM 13995 / JCM 10881 / RKU-1).